Consider the following 210-residue polypeptide: Mitochondrial coenzyme A diphosphatase NUDT8 (210 aa).

In terms of domain architecture, Nudix hydrolase spans 25 to 172 (LRSRPAAAAV…HFSYTLPVFL (148 aa)). At Lys-70 the chain carries N6-succinyllysine. The Nudix box signature appears at 70–91 (KCDPDDQDVIHTALRETQEELG). Mg(2+) is bound by residues Glu-85 and Glu-89. At Lys-96 the chain carries N6-succinyllysine.

Belongs to the Nudix hydrolase family. As to quaternary structure, monomer. Requires Mg(2+) as cofactor. The cofactor is Mn(2+). As to expression, expressed at the highest levels in the kidneys, heart, brown adipose tissue and liver (at protein level). Expressed at lower levels in the brain, skeletal muscle, and white adipose tissue (at protein level).

It is found in the mitochondrion. The enzyme catalyses an acyl-CoA + H2O = an acyl-4'-phosphopantetheine + adenosine 3',5'-bisphosphate + 2 H(+). It catalyses the reaction CoA + H2O = (R)-4'-phosphopantetheine + adenosine 3',5'-bisphosphate + 2 H(+). The catalysed reaction is acetyl-CoA + H2O = S-acetyl-4'-phosphopantetheine + adenosine 3',5'-bisphosphate + 2 H(+). It carries out the reaction butanoyl-CoA + H2O = S-butanoyl-4'-phosphopantetheine + adenosine 3',5'-bisphosphate + 2 H(+). The enzyme catalyses hexanoyl-CoA + H2O = hexanoyl-4'-phosphopantetheine + adenosine 3',5'-bisphosphate + 2 H(+). It catalyses the reaction octanoyl-CoA + H2O = S-octanoyl-4'-phosphopantetheine + adenosine 3',5'-bisphosphate + 2 H(+). The catalysed reaction is propanoyl-CoA + H2O = propanoyl-4'-phosphopantetheine + adenosine 3',5'-bisphosphate + 2 H(+). It carries out the reaction malonyl-CoA + H2O = malonyl-4'-phosphopantetheine + adenosine 3',5'-bisphosphate + 2 H(+). The enzyme catalyses succinyl-CoA + H2O = succinyl-4'-phosphopantetheine + adenosine 3',5'-bisphosphate + 2 H(+). It catalyses the reaction a 5'-end CoA-ribonucleoside in mRNA + H2O = a 5'-end phospho-adenosine-phospho-ribonucleoside in mRNA + (R)-4'-phosphopantetheine + 2 H(+). Functionally, acyl-CoA diphosphatase that mediates the hydrolysis of a wide range of CoA and CoA esters yielding 3',5'-ADP and the corresponding 4'-phosphopantetheine derivative as products. Hydrolyzes short- and medium-chain acyl-CoAs, exhibiting the highest activity toward free CoA, hexanoyl-CoA, and octanoyl-CoA and the lowest activity against acetyl-CoA. Exhibits decapping activity towards dpCoA-capped RNAs in vitro. In Mus musculus (Mouse), this protein is Mitochondrial coenzyme A diphosphatase NUDT8 (Nudt8).